Reading from the N-terminus, the 355-residue chain is N6-mAMP deaminase (355 aa).

Zn(2+) contacts are provided by H13 and H15. N(6)-methyl-AMP contacts are provided by residues H15, N17, H65, 97–100, D160, and G190; that span reads TTPK. Residue H217 coordinates Zn(2+). 3 residues coordinate N(6)-methyl-AMP: E220, D295, and D296. The active-site Proton donor is the E220. Zn(2+) is bound at residue D295.

The protein belongs to the metallo-dependent hydrolases superfamily. Adenosine and AMP deaminases family. As to quaternary structure, monomer. Zn(2+) is required as a cofactor.

The protein localises to the cytoplasm. The protein resides in the cytosol. It catalyses the reaction N(6)-methyl-AMP + H2O + H(+) = IMP + methylamine. Functionally, catalyzes the hydrolysis of the free cytosolic methylated adenosine nucleotide N(6)-methyl-AMP (N6-mAMP) to produce inositol monophosphate (IMP) and methylamine. Is required for the catabolism of cytosolic N6-mAMP, which is derived from the degradation of mRNA containing N6-methylated adenine (m6A). Does not possess deaminase activity toward adenosine, AMP, N6-methyladenosine, or N6-mATP in vitro. The sequence is that of N6-mAMP deaminase from Arabidopsis thaliana (Mouse-ear cress).